The primary structure comprises 38 residues: Phi-Lf prophage-derived putative minor coat protein (38 aa).

This chain is Phi-Lf prophage-derived putative minor coat protein (gIX-1), found in Xanthomonas campestris pv. campestris (strain ATCC 33913 / DSM 3586 / NCPPB 528 / LMG 568 / P 25).